A 161-amino-acid polypeptide reads, in one-letter code: MKKFFISVVFIVLLTFTTFINSATAAKLDDNVRTLPLNEDKEVVLTIKEYTQGKREFTNVCSQCHVGGITKTNPDVSLDPETLALAYPARDNIEGLIDYMQNPTTYDGFIEISEFHPSIKSADIYPEMRNLTEDDLYAIAGYILVQPKVLGKQWGGGKIFR.

The signal sequence occupies residues 1 to 25; that stretch reads MKKFFISVVFIVLLTFTTFINSATA. Residues Cys61, Cys64, His65, and His116 each coordinate heme c.

Belongs to the cytochrome c family. PsbV subfamily. As to quaternary structure, PSII is composed of 1 copy each of membrane proteins PsbA, PsbB, PsbC, PsbD, PsbE, PsbF, PsbH, PsbI, PsbJ, PsbK, PsbL, PsbM, PsbT, PsbX, PsbY, PsbZ, Psb30/Ycf12, peripheral proteins PsbO, CyanoQ (PsbQ), PsbU, PsbV and a large number of cofactors. It forms dimeric complexes. Requires heme c as cofactor.

The protein resides in the cellular thylakoid membrane. Functionally, one of the extrinsic, lumenal subunits of photosystem II (PSII). PSII is a light-driven water plastoquinone oxidoreductase, using light energy to abstract electrons from H(2)O, generating a proton gradient subsequently used for ATP formation. The extrinsic proteins stabilize the structure of photosystem II oxygen-evolving complex (OEC), the ion environment of oxygen evolution and protect the OEC against heat-induced inactivation. Low-potential cytochrome c that plays a role in the OEC of PSII. This chain is Photosystem II extrinsic protein V, found in Trichodesmium erythraeum (strain IMS101).